The chain runs to 446 residues: Glutamyl-tRNA reductase (446 aa).

Substrate-binding positions include 49–52 (TCNR), Ser-107, 112–114 (EPQ), and Gln-118. Cys-50 serves as the catalytic Nucleophile. NADP(+) is bound at residue 187-192 (GAGETI). The disordered stretch occupies residues 417 to 446 (NANEDTRESVDKEQTGTTQGAARGDQRSTG). A compositionally biased stretch (basic and acidic residues) spans 420–430 (EDTRESVDKEQ).

Belongs to the glutamyl-tRNA reductase family. In terms of assembly, homodimer.

It catalyses the reaction (S)-4-amino-5-oxopentanoate + tRNA(Glu) + NADP(+) = L-glutamyl-tRNA(Glu) + NADPH + H(+). The protein operates within porphyrin-containing compound metabolism; protoporphyrin-IX biosynthesis; 5-aminolevulinate from L-glutamyl-tRNA(Glu): step 1/2. Catalyzes the NADPH-dependent reduction of glutamyl-tRNA(Glu) to glutamate 1-semialdehyde (GSA). This is Glutamyl-tRNA reductase from Alkalilimnicola ehrlichii (strain ATCC BAA-1101 / DSM 17681 / MLHE-1).